A 352-amino-acid polypeptide reads, in one-letter code: Histidinol-phosphate aminotransferase (352 aa).

K221 carries the N6-(pyridoxal phosphate)lysine modification.

It belongs to the class-II pyridoxal-phosphate-dependent aminotransferase family. Histidinol-phosphate aminotransferase subfamily. As to quaternary structure, homodimer. It depends on pyridoxal 5'-phosphate as a cofactor.

It carries out the reaction L-histidinol phosphate + 2-oxoglutarate = 3-(imidazol-4-yl)-2-oxopropyl phosphate + L-glutamate. Its pathway is amino-acid biosynthesis; L-histidine biosynthesis; L-histidine from 5-phospho-alpha-D-ribose 1-diphosphate: step 7/9. This chain is Histidinol-phosphate aminotransferase, found in Staphylococcus aureus (strain MSSA476).